A 90-amino-acid chain; its full sequence is Cell division topological specificity factor (90 aa).

It belongs to the MinE family.

Functionally, prevents the cell division inhibition by proteins MinC and MinD at internal division sites while permitting inhibition at polar sites. This ensures cell division at the proper site by restricting the formation of a division septum at the midpoint of the long axis of the cell. The sequence is that of Cell division topological specificity factor from Bordetella avium (strain 197N).